The following is a 152-amino-acid chain: 17.1 kDa class II heat shock protein (152 aa).

The region spanning 36 to 152 is the sHSP domain; that stretch reads DAKAMAATPA…KPKTIQVKVA (117 aa).

This sequence belongs to the small heat shock protein (HSP20) family.

The protein localises to the cytoplasm. The chain is 17.1 kDa class II heat shock protein (HSP17.7) from Pisum sativum (Garden pea).